The following is a 428-amino-acid chain: GTPase Obg (428 aa).

The region spanning 1-158 (MFIDEVIITV…IKVKLELKLL (158 aa)) is the Obg domain. An OBG-type G domain is found at 159–330 (ADVALVGYPS…ILYKTYDMLS (172 aa)). Residues 165 to 172 (GYPSVGKS), 190 to 194 (FTTLE), 212 to 215 (DIPG), 282 to 285 (NKMD), and 311 to 313 (SVL) contribute to the GTP site. Residues S172 and T192 each coordinate Mg(2+). Positions 349 to 428 (ELKIEKEDFE…IADVEFEYFE (80 aa)) constitute an OCT domain.

This sequence belongs to the TRAFAC class OBG-HflX-like GTPase superfamily. OBG GTPase family. In terms of assembly, monomer. Mg(2+) serves as cofactor.

It is found in the cytoplasm. In terms of biological role, an essential GTPase which binds GTP, GDP and possibly (p)ppGpp with moderate affinity, with high nucleotide exchange rates and a fairly low GTP hydrolysis rate. Plays a role in control of the cell cycle, stress response, ribosome biogenesis and in those bacteria that undergo differentiation, in morphogenesis control. This chain is GTPase Obg, found in Fusobacterium nucleatum subsp. nucleatum (strain ATCC 25586 / DSM 15643 / BCRC 10681 / CIP 101130 / JCM 8532 / KCTC 2640 / LMG 13131 / VPI 4355).